A 520-amino-acid polypeptide reads, in one-letter code: Beta-galactoside-specific lectin 4 (520 aa).

N-linked (GlcNAc...) asparagine glycosylation is present at Asn107. Glu159 is a catalytic residue. A disulfide bond links Cys240 and Cys266. Positions 241–265 (GERPSSSDVRYWPLVIRPVIADDVT) are cleaved as a propeptide — connecting peptide. A Ricin B-type lectin 1 domain is found at 269–396 (SEPTVRIVGR…YTLGQGWLAG (128 aa)). 284–286 (DVR) contacts D-galactose. Asn322 is a glycosylation site (N-linked (GlcNAc...) asparagine). Cysteines 325 and 342 form a disulfide. N-linked (GlcNAc...) asparagine glycans are attached at residues Asn357 and Asn397. A Ricin B-type lectin 2 domain is found at 400–520 (APREVTIYGF…KPNQMWLPVP (121 aa)). Disulfide bonds link Cys413–Cys426 and Cys451–Cys467. Position 494–496 (494–496 (DVA)) interacts with D-galactose.

The protein belongs to the ribosome-inactivating protein family. Type 2 RIP subfamily. As to quaternary structure, disulfide-linked dimer of A and B chains.

It catalyses the reaction Endohydrolysis of the N-glycosidic bond at one specific adenosine on the 28S rRNA.. The A chain is responsible for inhibiting protein synthesis through the catalytic inactivation of 60S ribosomal subunits by removing adenine from position 4,324 of 28S rRNA. The B chain binds to cell receptors and probably facilitates the entry into the cell of the A chain; B chains are also responsible for cell agglutination (lectin activity). Inhibits growth of the human tumor cell line Molt4. This chain is Beta-galactoside-specific lectin 4, found in Viscum album (European mistletoe).